Reading from the N-terminus, the 501-residue chain is Cytochrome P450 90A4 (501 aa).

Residues 2–22 (AAAALLLLAAAAAAVVVAMAL) form a helical membrane-spanning segment. Cys446 lines the heme pocket.

It belongs to the cytochrome P450 family. The cofactor is heme. In terms of tissue distribution, highly expressed in shoot apex and inflorenscence. Expressed in roots, stems, leaf blades and leaf sheaths.

The protein localises to the cell membrane. The protein operates within plant hormone biosynthesis; brassinosteroid biosynthesis. Its function is as follows. Catalyzes the C23-alpha-hydroxylation step in brassinosteroid biosynthesis. Converts 6-deoxocathasterone to 6-deoxoteasterone in the late C6-oxidation pathway and cathasterone to teasterone (TE) in the early C6-oxidation pathway of brassinolide (BL) biosynthesis. This chain is Cytochrome P450 90A4, found in Oryza sativa subsp. japonica (Rice).